Consider the following 420-residue polypeptide: Pre-mRNA-splicing factor RBM22 (420 aa).

A C3H1-type zinc finger spans residues 159 to 186; that stretch reads RNRPHICSFWVKGECKRGEECPYRHEKP. The RRM domain maps to 232-305; it reads TTLYVGGLGD…RRLNVKWGRS (74 aa). 2 disordered regions span residues 303-343 and 372-420; these read GRSQ…AAEE and APPP…HSSP. The segment covering 309–318 has biased composition (basic and acidic residues); sequence RGKEKDKEGT.

It belongs to the SLT11 family. Component of the pre-catalytic and catalytic spliceosome complexes. Component of the postcatalytic spliceosome P complex.

It is found in the nucleus. It localises to the cytoplasm. Required for pre-mRNA splicing as component of the activated spliceosome. Involved in the first step of pre-mRNA splicing. Binds directly to the internal stem-loop (ISL) domain of the U6 snRNA and to the pre-mRNA intron near the 5' splice site during the activation and catalytic phases of the spliceosome cycle. The sequence is that of Pre-mRNA-splicing factor RBM22 (RBM22) from Gallus gallus (Chicken).